Here is a 176-residue protein sequence, read N- to C-terminus: 3-hydroxydecanoyl-[acyl-carrier-protein] dehydratase (176 aa).

His-71 is a catalytic residue.

Belongs to the thioester dehydratase family. FabA subfamily. Homodimer.

It is found in the cytoplasm. It catalyses the reaction a (3R)-hydroxyacyl-[ACP] = a (2E)-enoyl-[ACP] + H2O. The enzyme catalyses (3R)-hydroxydecanoyl-[ACP] = (2E)-decenoyl-[ACP] + H2O. The catalysed reaction is (2E)-decenoyl-[ACP] = (3Z)-decenoyl-[ACP]. It functions in the pathway lipid metabolism; fatty acid biosynthesis. Functionally, necessary for the introduction of cis unsaturation into fatty acids. Catalyzes the dehydration of (3R)-3-hydroxydecanoyl-ACP to E-(2)-decenoyl-ACP and then its isomerization to Z-(3)-decenoyl-ACP. Can catalyze the dehydratase reaction for beta-hydroxyacyl-ACPs with saturated chain lengths up to 16:0, being most active on intermediate chain length. The polypeptide is 3-hydroxydecanoyl-[acyl-carrier-protein] dehydratase (Rhodopseudomonas palustris (strain BisB18)).